Here is a 591-residue protein sequence, read N- to C-terminus: Alternative cytochrome c oxidase subunit 1 (591 aa).

A helical membrane pass occupies residues 40–60 (VIAIQYSLTASAIGLVALVLS). Residue His-88 coordinates heme b. Helical transmembrane passes span 90-110 (MIMV…NYLI), 126-146 (MLSY…FFVP), 172-192 (GIVL…MGGL), 215-235 (VWGI…LFVG), 274-294 (LFWF…FGIV), 313-333 (VWAI…HMYV), 337-357 (YPYF…PTAI), 377-397 (MLFA…GLFL), 412-432 (VVAH…LGAI), 453-473 (FWVT…LGLL), and 498-518 (FITV…FNLV). 4 residues coordinate Cu cation: His-280, Tyr-284, His-329, and His-330. Residues 280–284 (HPEVY) constitute a cross-link (1'-histidyl-3'-tyrosine (His-Tyr)). Positions 415 and 417 each coordinate heme b.

Belongs to the heme-copper respiratory oxidase family. In terms of assembly, this alternate cytochrome c oxidase consists of a subunit I and two cytochromes c. Equivalents to subunit 2 and 3 are not present in this complex.

It localises to the cell membrane. It catalyses the reaction 4 Fe(II)-[cytochrome c] + O2 + 8 H(+)(in) = 4 Fe(III)-[cytochrome c] + 2 H2O + 4 H(+)(out). Cytochrome c oxidase is the component of the respiratory chain that catalyzes the reduction of oxygen to water. Subunits 1-3 form the functional core of the enzyme complex. Co I is the catalytic subunit of the enzyme. Electrons originating in cytochrome c are transferred via the copper A center of subunit 2 and a low-spin heme of subunit 1 to the bimetallic center formed by a high-spin heme and copper B. The sequence is that of Alternative cytochrome c oxidase subunit 1 (coxN) from Bradyrhizobium diazoefficiens (strain JCM 10833 / BCRC 13528 / IAM 13628 / NBRC 14792 / USDA 110).